A 537-amino-acid polypeptide reads, in one-letter code: Extracellular exo-inulinase inuE (537 aa).

The N-terminal stretch at 1-19 (MARLLKAVTVCALAGIAHA) is a signal peptide. The active site involves aspartate 41. 8 N-linked (GlcNAc...) asparagine glycosylation sites follow: asparagine 49, asparagine 67, asparagine 112, asparagine 300, asparagine 363, asparagine 398, asparagine 430, and asparagine 531.

Belongs to the glycosyl hydrolase 32 family.

The protein resides in the secreted. The enzyme catalyses Hydrolysis of terminal, non-reducing (2-&gt;1)- and (2-&gt;6)-linked beta-D-fructofuranose residues in fructans.. The catalytic activity is increased by manganese cathions, but strongly inhibited by other metal ions such as copper, aluminum, silver, iron, nickel, zinc and magnesium cathions. In terms of biological role, exo-inulinase involved in utilization of the plant storage polymer inulin, consisting of fructooligosaccharides with a degree of polymerization (DP) value from 2 to 60. Splits off terminal fructose units successively from the non-reducing end of the inulin molecule, and also hydrolyze sucrose and raffinose. This Aspergillus ficuum protein is Extracellular exo-inulinase inuE (exoI).